A 506-amino-acid chain; its full sequence is Probable cytochrome P450 519E1 (506 aa).

A helical membrane pass occupies residues 1 to 21; sequence MGIGLIILYLLIGLLAYDFTK. Cysteine 453 is a binding site for heme.

It belongs to the cytochrome P450 family. It depends on heme as a cofactor.

The protein resides in the membrane. The protein is Probable cytochrome P450 519E1 (cyp519E1) of Dictyostelium discoideum (Social amoeba).